The sequence spans 54 residues: MASKERQTILLACTECKNKNYYYARGKKKEFKLELNKFCKACGKSTKHKEGKAN.

Belongs to the bacterial ribosomal protein bL33 family.

This chain is Large ribosomal subunit protein bL33, found in Elusimicrobium minutum (strain Pei191).